A 578-amino-acid chain; its full sequence is Dystrotelin (578 aa).

The ZZ-type zinc finger occupies 223–279; it reads THPARCTLCRTFPITGLRYRCLKCLNFDICQMCFLSGLHSKSHQKSHPVIEHCIQMS. Positions 228, 231, 243, 246, 252, 255, 265, and 269 each coordinate Zn(2+). Residues 322–351 are a coiled coil; it reads HHAQARLLKKQLNQYKDKLQAIYTSQEERI. The disordered stretch occupies residues 382–475; sequence RLQPPGPSSS…QSQTQKMPQK (94 aa). Composition is skewed to basic and acidic residues over residues 399 to 410 and 431 to 451; these read KVDHSSTEKVPK and PKLDEVDRSHRSHTNAEHALR. Residues 455-472 show a composition bias toward polar residues; it reads SPETTLHSTRAQSQTQKM. The stretch at 503 to 537 forms a coiled coil; it reads ALAAVEKKEAGNIKERKDELEEEELQELLSKLMDA.

The protein localises to the cell membrane. The sequence is that of Dystrotelin (DYTN) from Homo sapiens (Human).